Consider the following 67-residue polypeptide: Teratocyte protein CftICK-II (67 aa).

The first 25 residues, Met-1–Ala-25, serve as a signal peptide directing secretion. 3 cysteine pairs are disulfide-bonded: Cys-28–Cys-42, Cys-35–Cys-46, and Cys-41–Cys-57.

Abundantly expressed by teratocytes, which are extra-embryonic cells released by parasitoid wasps into their hosts during larval eclosion.

It localises to the secreted. Its function is as follows. This endoparasitoid wasp peptide has immununosuppressive, antimicrobial and insecticidal activities. Suppress cellular immunity which is detectable as a reduction of hemocyte encapsulation in the host. Shows moderate antifungal activity against C.albicans (MIC=4 ug/ml). In vivo, ingestion of this peptide (probably at excessive doses) increases larval mortality and reduces leaf consumption of D.saccharalis, a permissive host for C.flavipes. This Cotesia flavipes (Parasitic wasp) protein is Teratocyte protein CftICK-II.